The primary structure comprises 87 residues: Toxin CsEv2 (87 aa).

A signal peptide spans 1-19 (MNSLLIITACLFLIGTVWA). The 66-residue stretch at 20–85 (KEGYLVNKST…TYPLPNKSCS (66 aa)) folds into the LCN-type CS-alpha/beta domain. Intrachain disulfides connect Cys-31-Cys-84, Cys-35-Cys-60, Cys-44-Cys-65, and Cys-48-Cys-67.

This sequence belongs to the long (4 C-C) scorpion toxin superfamily. Sodium channel inhibitor family. Beta subfamily. Expressed by the venom gland.

The protein resides in the secreted. Beta toxins bind voltage-independently at site-4 of sodium channels (Nav) and shift the voltage of activation toward more negative potentials thereby affecting sodium channel activation and promoting spontaneous and repetitive firing. Induces immediate paralysis in crickets after injection, with a total paralysis occurring within 15-30 minutes and lasting for 1-2 hours. Is also lethal to vertebrate (chicks) when injected in very high dosages (more that 100 mg/kg). The polypeptide is Toxin CsEv2 (Centruroides sculpturatus (Arizona bark scorpion)).